The primary structure comprises 160 residues: pH-gated potassium channel KcsA (160 aa).

Residues 1–27 are Cytoplasmic-facing; that stretch reads MPPMLSGLLARLVKLLLGRHGSALHWR. Residues 28 to 50 traverse the membrane as a helical segment; that stretch reads AAGAATVLLVIVLLAGSYLAVLA. Residues 51–61 are Extracellular-facing; the sequence is ERGAPGAQLIT. Residues 62–72 constitute an intramembrane region (helical; Pore-forming); the sequence is YPRALWWSVET. Positions 73–80 form an intramembrane region, pore-forming; sequence ATTVGYGD. The Selectivity filter signature appears at 75–80; sequence TVGYGD. Over 81 to 87 the chain is Extracellular; the sequence is LYPVTLW. The helical transmembrane segment at 88-111 threads the bilayer; the sequence is GRLVAVVVMVAGITSFGLVTAALA. At 112–160 the chain is on the cytoplasmic side; sequence TWFVGREQERRGHFVRHSEKAAEEAYTRTTRALHERFDRLERMLDDNRR.

Belongs to the potassium channel family. In terms of assembly, homotetramer.

It localises to the cell membrane. In terms of biological role, acts as a pH-gated potassium ion channel; changing the cytosolic pH from 7 to 4 opens the channel. This is pH-gated potassium channel KcsA (kcsA) from Streptomyces coelicolor (strain ATCC BAA-471 / A3(2) / M145).